A 356-amino-acid chain; its full sequence is sn-glycerol-3-phosphate import ATP-binding protein UgpC (356 aa).

The region spanning 4–235 (LKLQAVTKSW…PASLFVASFI (232 aa)) is the ABC transporter domain. Residue 37–44 (GPSGCGKS) coordinates ATP.

This sequence belongs to the ABC transporter superfamily. sn-glycerol-3-phosphate importer (TC 3.A.1.1.3) family. In terms of assembly, the complex is composed of two ATP-binding proteins (UgpC), two transmembrane proteins (UgpA and UgpE) and a solute-binding protein (UgpB).

The protein resides in the cell inner membrane. It carries out the reaction sn-glycerol 3-phosphate(out) + ATP + H2O = sn-glycerol 3-phosphate(in) + ADP + phosphate + H(+). The catalysed reaction is glycerol 2-phosphate(out) + ATP + H2O = glycerol 2-phosphate(in) + ADP + phosphate + H(+). ATPase activity is stimulated when UgpB is bound to G3P. Transport is inhibited in vivo by increasing levels of internal phosphate. However, ATPase activity in proteoliposomes is neither inhibited by phosphate nor by the signal transducing protein PhoU or the phosphodiesterase UgpQ. Activated by gluconate and inhibited by fumarate. Functionally, part of the ABC transporter complex UgpBAEC involved in sn-glycerol-3-phosphate (G3P) import. Responsible for energy coupling to the transport system. Can also transport glycerophosphoryl diesters, which are hydrolyzed to G3P and alcohol during transport. The G3P moiety can be detected in the cytoplasm whereas the corresponding alcohol is usually found in the culture medium. It was proposed by Yang et al that the complex could also transport glycerol-2-phosphate (G2P) in vivo, but it was shown later by Wuttge et al that UgpB does not bind G2P, questioning this transport activity. G2P might be converted in the periplasm to G3P before its transport. The chain is sn-glycerol-3-phosphate import ATP-binding protein UgpC from Escherichia coli (strain K12).